The following is a 452-amino-acid chain: Sensor histidine kinase HprS (452 aa).

The Cytoplasmic segment spans residues 1-9 (MKRLSITVR). Residues 10–30 (LTLLFILLLSVAGAGIVWTLY) traverse the membrane as a helical segment. The Periplasmic segment spans residues 31 to 158 (NGLASELKWR…ARHNMLEQYK (128 aa)). A helical membrane pass occupies residues 159 to 179 (INSIIICIVAIVLCSVLSPLL). Over 180–452 (IRTGLREIKK…VFRITLPQRN (273 aa)) the chain is Cytoplasmic. An HAMP domain is found at 181–234 (RTGLREIKKLSGVTEALNYNDSREPVEVSALPRELKPLGQALNKMHHALVKDFE). Residues 242–452 (DLAHELRTPI…VFRITLPQRN (211 aa)) enclose the Histidine kinase domain. H245 is subject to Phosphohistidine; by autocatalysis.

Autophosphorylated.

The protein resides in the cell inner membrane. It carries out the reaction ATP + protein L-histidine = ADP + protein N-phospho-L-histidine.. Its function is as follows. Member of a two-component regulatory system HprR/HprS involved in response to hydrogen peroxide. Senses H(2)O(2), maybe via the redox state of the membrane. Activates HprR by phosphorylation. Can also phosphorylate CusR. In Escherichia coli (strain K12), this protein is Sensor histidine kinase HprS.